The following is a 378-amino-acid chain: tRNA-specific 2-thiouridylase MnmA (378 aa).

Residues 12 to 19 (GLSGGVDS) and methionine 38 each bind ATP. Residues 98 to 100 (NPD) form an interaction with target base in tRNA region. Cysteine 103 (nucleophile) is an active-site residue. The cysteines at positions 103 and 201 are disulfide-linked. Glycine 127 is a binding site for ATP. An interaction with tRNA region spans residues 151–153 (KDQ). Catalysis depends on cysteine 201, which acts as the Cysteine persulfide intermediate. Residues 319 to 320 (RY) are interaction with tRNA.

Belongs to the MnmA/TRMU family.

It is found in the cytoplasm. It catalyses the reaction S-sulfanyl-L-cysteinyl-[protein] + uridine(34) in tRNA + AH2 + ATP = 2-thiouridine(34) in tRNA + L-cysteinyl-[protein] + A + AMP + diphosphate + H(+). In terms of biological role, catalyzes the 2-thiolation of uridine at the wobble position (U34) of tRNA, leading to the formation of s(2)U34. The polypeptide is tRNA-specific 2-thiouridylase MnmA (Paracidovorax citrulli (strain AAC00-1) (Acidovorax citrulli)).